Consider the following 641-residue polypeptide: Fructose-1,6-bisphosphatase class 3 (641 aa).

The protein belongs to the FBPase class 3 family. The cofactor is Mn(2+).

The enzyme catalyses beta-D-fructose 1,6-bisphosphate + H2O = beta-D-fructose 6-phosphate + phosphate. Its pathway is carbohydrate biosynthesis; gluconeogenesis. The polypeptide is Fructose-1,6-bisphosphatase class 3 (Ligilactobacillus salivarius (strain UCC118) (Lactobacillus salivarius)).